The chain runs to 442 residues: MAAGTLYTYPENWRAFKAQIAAQYSGARLKIASAPPAFTFGQTNRSPAFLGNFPLGKVPAYQGDDGFCLFESNAIAHYLSNDVLRGSTPQASAQVLQWVSFADSEVIPPASAWVFPTLGIMQFNKQATEQAKEEVKRVLAVLNQHLNTRTFLVGERISLADITVVCSLLWLYKQVLEPAFRQPYPNVTRWFVTCVNQPQFKTVLGEVKLCEKMAQFDAKKFAEMQPKKEAPIKKEKGGKEGGKQQPQQQEKKEKKKEEKKAAPAEEEMDECEAALASEPKAKDPFAHLPKSSFVMDEFKRKYSNEDTMTVALPYFWDHFDREGFSIWYAEYRFPEELTMAFMSCNLITGMFQRLDKLRKNAFASVILFGANNDSCISGIWVFRGQDLAFPLSDDWQIDYESYTWRKLDVDSEECKTMVKEYFAWEGEFKHVGKPFNQGKIFK.

The GST N-terminal domain maps to 2-87 (AAGTLYTYPE…YLSNDVLRGS (86 aa)). The region spanning 88–216 (TPQASAQVLQ…VKLCEKMAQF (129 aa)) is the GST C-terminal domain. Composition is skewed to basic and acidic residues over residues 227-242 (KKEA…KEGG) and 249-263 (QEKK…KAAP). A disordered region spans residues 227–273 (KKEAPIKKEKGGKEGGKQQPQQQEKKEKKKEEKKAAPAEEEMDECEA). The 162-residue stretch at 281 to 442 (AKDPFAHLPK…KPFNQGKIFK (162 aa)) folds into the EF-1-gamma C-terminal domain.

In terms of assembly, EF-1 is composed of four subunits: alpha, beta, delta, and gamma.

In terms of biological role, probably plays a role in anchoring the complex to other cellular components. This is Elongation factor 1-gamma (eef1g) from Danio rerio (Zebrafish).